The primary structure comprises 560 residues: Excitatory amino acid transporter 5 (560 aa).

Topologically, residues 1–16 (MVPHAILARGRDVCRR) are cytoplasmic. Transmembrane regions (helical) follow at residues 17 to 37 (NGLLILSVLSVIVGCLLGFFL), 60 to 80 (MLKMMILPLVVSSLMSGLASL), and 94 to 114 (AYYLWTTFMAVIVGIFMVSII). At 115–216 (HPGSAAQKET…EVVYKSEPGT (102 aa)) the chain is on the extracellular side. The N-linked (GlcNAc...) asparagine glycan is linked to Asn191. The next 7 helical transmembrane spans lie at 217–237 (SDGMNVLGIVFFSATMGIMLG), 260–280 (IVAVAVWYFPFGIVFLIAGKI), 300–320 (VVCGLVLHGLFILPLLYFFIT), 330–350 (GILQALLIALATSSSSATLPI), 372–392 (VGATINMDGTALYEAVAAIFI), 414–434 (AASIGAAGIPQAGLVTMVIVL), and 457–477 (FRTMINVLGDALAAGIMAHIC).

This sequence belongs to the dicarboxylate/amino acid:cation symporter (DAACS) (TC 2.A.23) family. SLC1A7 subfamily. As to quaternary structure, interacts with the PDZ domains of DLG4. As to expression, expressed primarily in retina. Detectable in liver, heart, muscle and brain.

Its subcellular location is the photoreceptor inner segment membrane. It is found in the synaptic cell membrane. The enzyme catalyses K(+)(in) + L-glutamate(out) + 3 Na(+)(out) + H(+)(out) = K(+)(out) + L-glutamate(in) + 3 Na(+)(in) + H(+)(in). It catalyses the reaction K(+)(in) + L-aspartate(out) + 3 Na(+)(out) + H(+)(out) = K(+)(out) + L-aspartate(in) + 3 Na(+)(in) + H(+)(in). It carries out the reaction D-aspartate(out) + K(+)(in) + 3 Na(+)(out) + H(+)(out) = D-aspartate(in) + K(+)(out) + 3 Na(+)(in) + H(+)(in). Functionally, sodium-dependent, high-affinity amino acid transporter that mediates the uptake of L-glutamate and also L-aspartate and D-aspartate. Functions as a symporter that transports one amino acid molecule together with two or three Na(+) ions and one proton, in parallel with the counter-transport of one K(+) ion. Acts primarily as an inhibitory glutamate-gated chloride channel being a major inhibitory presynaptic receptor at mammalian rod bipolar cell axon terminals. Glutamate binding gates a large Cl(-) conductance that mediates inhibition, affecting visual processing in the retina. In Homo sapiens (Human), this protein is Excitatory amino acid transporter 5.